Here is a 153-residue protein sequence, read N- to C-terminus: Superoxide dismutase [Cu-Zn] (153 aa).

The Cu cation site is built by His-45, His-47, and His-62. Cys-56 and Cys-145 form a disulfide bridge. 4 residues coordinate Zn(2+): His-62, His-70, His-79, and Asp-82. Residue His-119 coordinates Cu cation.

The protein belongs to the Cu-Zn superoxide dismutase family. In terms of assembly, homodimer. The cofactor is Cu cation. Zn(2+) is required as a cofactor.

The protein localises to the cytoplasm. It carries out the reaction 2 superoxide + 2 H(+) = H2O2 + O2. Destroys radicals which are normally produced within the cells and which are toxic to biological systems. The protein is Superoxide dismutase [Cu-Zn] of Drosophila yakuba (Fruit fly).